The primary structure comprises 147 residues: Lysozyme C (147 aa).

Residues Met-1 to Gly-18 form the signal peptide. Residues Lys-19–Leu-147 form the C-type lysozyme domain. Cystine bridges form between Cys-24–Cys-145, Cys-48–Cys-133, Cys-82–Cys-98, and Cys-94–Cys-112.

The protein belongs to the glycosyl hydrolase 22 family. In terms of assembly, monomer.

The protein localises to the secreted. The catalysed reaction is Hydrolysis of (1-&gt;4)-beta-linkages between N-acetylmuramic acid and N-acetyl-D-glucosamine residues in a peptidoglycan and between N-acetyl-D-glucosamine residues in chitodextrins.. In terms of biological role, lysozymes have primarily a bacteriolytic function; those in tissues and body fluids are associated with the monocyte-macrophage system and enhance the activity of immunoagents. The chain is Lysozyme C (LYZ) from Meleagris gallopavo (Wild turkey).